The primary structure comprises 250 residues: uncharacterized protein (250 aa).

Residues 7 to 244 (LKVEDLHVYR…YKKECGKCYK (238 aa)) enclose the ABC transporter domain. ATP is bound at residue 39 to 46 (GPNGAGKS).

The protein belongs to the ABC transporter superfamily.

This is an uncharacterized protein from Methanocaldococcus jannaschii (strain ATCC 43067 / DSM 2661 / JAL-1 / JCM 10045 / NBRC 100440) (Methanococcus jannaschii).